A 104-amino-acid chain; its full sequence is Large ribosomal subunit protein bL21 (104 aa).

It belongs to the bacterial ribosomal protein bL21 family. As to quaternary structure, part of the 50S ribosomal subunit. Contacts protein L20.

Its function is as follows. This protein binds to 23S rRNA in the presence of protein L20. The sequence is that of Large ribosomal subunit protein bL21 from Agrobacterium fabrum (strain C58 / ATCC 33970) (Agrobacterium tumefaciens (strain C58)).